A 431-amino-acid chain; its full sequence is Serine hydroxymethyltransferase (431 aa).

121–123 (AHV) serves as a coordination point for (6S)-5,6,7,8-tetrahydrofolate. Position 227 is an N6-(pyridoxal phosphate)lysine (K227).

It belongs to the SHMT family. As to quaternary structure, homodimer. Pyridoxal 5'-phosphate serves as cofactor.

The protein resides in the cytoplasm. The protein operates within amino-acid biosynthesis; glycine biosynthesis; glycine from L-serine: step 1/1. Functionally, catalyzes the reversible interconversion of serine and glycine with a modified folate serving as the one-carbon carrier. Also exhibits a pteridine-independent aldolase activity toward beta-hydroxyamino acids, producing glycine and aldehydes, via a retro-aldol mechanism. The sequence is that of Serine hydroxymethyltransferase from Metallosphaera sedula (strain ATCC 51363 / DSM 5348 / JCM 9185 / NBRC 15509 / TH2).